A 49-amino-acid polypeptide reads, in one-letter code: Lysozyme C (49 aa).

Positions 1–49 constitute a C-type lysozyme domain; that stretch reads SKMKKCEFAKIAKEQHMDGYHGVSLADWVCLVNNESDFNTKAINRNKGI. The active site involves glutamate 35.

Belongs to the glycosyl hydrolase 22 family. As to quaternary structure, monomer.

Its subcellular location is the secreted. It carries out the reaction Hydrolysis of (1-&gt;4)-beta-linkages between N-acetylmuramic acid and N-acetyl-D-glucosamine residues in a peptidoglycan and between N-acetyl-D-glucosamine residues in chitodextrins.. Lysozymes have primarily a bacteriolytic function; those in tissues and body fluids are associated with the monocyte-macrophage system and enhance the activity of immunoagents. This is Lysozyme C (LYZ) from Pseudocheirus peregrinus (Common ring-tailed possum).